Consider the following 213-residue polypeptide: Pyrrolidone-carboxylate peptidase (213 aa).

Active-site residues include glutamate 81, cysteine 144, and histidine 166.

It belongs to the peptidase C15 family. In terms of assembly, homodimer.

It localises to the cytoplasm. The enzyme catalyses Release of an N-terminal pyroglutamyl group from a polypeptide, the second amino acid generally not being Pro.. Removes 5-oxoproline from various penultimate amino acid residues except L-proline. The chain is Pyrrolidone-carboxylate peptidase (pcp) from Pseudomonas fluorescens.